The sequence spans 355 residues: Peptide chain release factor 1 (355 aa).

Gln-233 carries the post-translational modification N5-methylglutamine. Residues 280 to 310 are disordered; it reads ERRKKEQKRANNRRGQVGSGDRSERIRTYNF.

It belongs to the prokaryotic/mitochondrial release factor family. Post-translationally, methylated by PrmC. Methylation increases the termination efficiency of RF1.

Its subcellular location is the cytoplasm. Functionally, peptide chain release factor 1 directs the termination of translation in response to the peptide chain termination codons UAG and UAA. The polypeptide is Peptide chain release factor 1 (Rickettsia canadensis (strain McKiel)).